The chain runs to 357 residues: 3-isopropylmalate dehydrogenase (357 aa).

75–88 is a binding site for NAD(+); it reads GPKWDTLPPAERPE. Substrate contacts are provided by R96, R106, R134, and D222. Mg(2+)-binding residues include D222, D246, and D250. 279–291 provides a ligand contact to NAD(+); sequence GSAPDIAGQQKAN.

The protein belongs to the isocitrate and isopropylmalate dehydrogenases family. LeuB type 1 subfamily. As to quaternary structure, homodimer. Mg(2+) serves as cofactor. It depends on Mn(2+) as a cofactor.

The protein resides in the cytoplasm. It catalyses the reaction (2R,3S)-3-isopropylmalate + NAD(+) = 4-methyl-2-oxopentanoate + CO2 + NADH. Its pathway is amino-acid biosynthesis; L-leucine biosynthesis; L-leucine from 3-methyl-2-oxobutanoate: step 3/4. In terms of biological role, catalyzes the oxidation of 3-carboxy-2-hydroxy-4-methylpentanoate (3-isopropylmalate) to 3-carboxy-4-methyl-2-oxopentanoate. The product decarboxylates to 4-methyl-2 oxopentanoate. This Moorella thermoacetica (strain ATCC 39073 / JCM 9320) protein is 3-isopropylmalate dehydrogenase.